A 227-amino-acid chain; its full sequence is MAGVGVGPLQGMVRFGLLVLTVCAACARGLYFHIGETEKRCFIEEIPDETMVIGNYRTQMWDKQKEVFLPSTPGLGMHVEVKDPDGKVVLSRQYGSEGRFTFTSHTPGDHQICLHSNSTRMALFAGGKLRVHLDIQVGEHANNYPEIAAKDKLTELQLRARQLLDQVEQIQKEQDYQRYREERFRLTSESTNQRVLWWSIAQTVILILTGIWQMRHLKSFFEAKKLV.

The N-terminal stretch at 1-29 (MAGVGVGPLQGMVRFGLLVLTVCAACARG) is a signal peptide. Over 30–194 (LYFHIGETEK…RLTSESTNQR (165 aa)) the chain is Lumenal. The GOLD domain occupies 39-137 (KRCFIEEIPD…KLRVHLDIQV (99 aa)). Residue Asn117 is glycosylated (N-linked (GlcNAc...) asparagine). The stretch at 147–176 (IAAKDKLTELQLRARQLLDQVEQIQKEQDY) forms a coiled coil. The helical transmembrane segment at 195–212 (VLWWSIAQTVILILTGIW) threads the bilayer. Over 213-227 (QMRHLKSFFEAKKLV) the chain is Cytoplasmic. A COPII vesicle coat-binding motif is present at residues 220-221 (FF). The short motif at 220 to 227 (FFEAKKLV) is the COPI vesicle coat-binding element.

This sequence belongs to the EMP24/GP25L family.

Its subcellular location is the endoplasmic reticulum membrane. Functionally, involved in vesicular protein trafficking, mainly in the early secretory pathway. Involved in the maintenance of the Golgi apparatus. Appears to play a role in the biosynthesis of secreted cargo including processing. Involved in endoplasmic reticulum stress response. May play a role in the regulation of heat-shock response and apoptosis. This chain is Transmembrane emp24 domain-containing protein 4 (Tmed4), found in Mus musculus (Mouse).